The chain runs to 343 residues: Heat-inducible transcription repressor HrcA (343 aa).

Belongs to the HrcA family.

Functionally, negative regulator of class I heat shock genes (grpE-dnaK-dnaJ and groELS operons). Prevents heat-shock induction of these operons. This chain is Heat-inducible transcription repressor HrcA, found in Thermobifida fusca (strain YX).